A 242-amino-acid polypeptide reads, in one-letter code: Biosynthetic peptidoglycan transglycosylase (242 aa).

Residues 19 to 39 form a helical membrane-spanning segment; sequence ILAALAVFWGGGIALFSVVPV.

The protein belongs to the glycosyltransferase 51 family.

Its subcellular location is the cell inner membrane. The catalysed reaction is [GlcNAc-(1-&gt;4)-Mur2Ac(oyl-L-Ala-gamma-D-Glu-L-Lys-D-Ala-D-Ala)](n)-di-trans,octa-cis-undecaprenyl diphosphate + beta-D-GlcNAc-(1-&gt;4)-Mur2Ac(oyl-L-Ala-gamma-D-Glu-L-Lys-D-Ala-D-Ala)-di-trans,octa-cis-undecaprenyl diphosphate = [GlcNAc-(1-&gt;4)-Mur2Ac(oyl-L-Ala-gamma-D-Glu-L-Lys-D-Ala-D-Ala)](n+1)-di-trans,octa-cis-undecaprenyl diphosphate + di-trans,octa-cis-undecaprenyl diphosphate + H(+). It participates in cell wall biogenesis; peptidoglycan biosynthesis. Its function is as follows. Peptidoglycan polymerase that catalyzes glycan chain elongation from lipid-linked precursors. The protein is Biosynthetic peptidoglycan transglycosylase of Salmonella newport (strain SL254).